The sequence spans 717 residues: UvrABC system protein C (717 aa).

The region spanning Asp-16–Val-95 is the GIY-YIG domain. One can recognise a UVR domain in the interval Asp-208–Ala-243. Disordered stretches follow at residues Thr-517–Arg-555 and His-696–Gln-717. 2 stretches are compositionally biased toward basic and acidic residues: residues Glu-541–Arg-553 and Glu-707–Gln-717.

It belongs to the UvrC family. Interacts with UvrB in an incision complex.

The protein localises to the cytoplasm. The UvrABC repair system catalyzes the recognition and processing of DNA lesions. UvrC both incises the 5' and 3' sides of the lesion. The N-terminal half is responsible for the 3' incision and the C-terminal half is responsible for the 5' incision. The sequence is that of UvrABC system protein C from Saccharopolyspora erythraea (strain ATCC 11635 / DSM 40517 / JCM 4748 / NBRC 13426 / NCIMB 8594 / NRRL 2338).